The chain runs to 450 residues: Cytochrome c1 (450 aa).

The N-terminal stretch at 1 to 21 (MTLRNASLTAVAALTVALAGG) is a signal peptide. Over residues 24–58 (AQDASTAPGTTAPAGSSYHTNEAAPAAADTAPAAE) the composition is skewed to low complexity. The disordered stretch occupies residues 24–210 (AQDASTAPGT…AAAQEAGDSH (187 aa)). Composition is skewed to acidic residues over residues 59–77 (AADE…EVTE), 85–108 (PAEE…EPAA), and 118–194 (APAE…EDEA). 3 residues coordinate heme c: C245, C248, and H249. Positions 284-305 (PETEEDRPRVPTDHFPTVSGEG) are disordered. A heme c-binding site is contributed by M373. A helical transmembrane segment spans residues 421-435 (SVIFLIVLAALLYLT).

In terms of assembly, the main subunits of complex b-c1 are: cytochrome b, cytochrome c1 and the Rieske protein. Post-translationally, binds 1 heme c group covalently per subunit.

The protein resides in the cell membrane. In terms of biological role, component of the ubiquinol-cytochrome c reductase complex (complex III or cytochrome b-c1 complex), which is a respiratory chain that generates an electrochemical potential coupled to ATP synthesis. c1 functions as an electron donor to cytochrome c. This Paracoccus denitrificans protein is Cytochrome c1 (petC).